Reading from the N-terminus, the 605-residue chain is Elongation factor 4 (605 aa).

A tr-type G domain is found at 9–192 (SRIRNFCIIA…AIIARVPSPA (184 aa)). GTP contacts are provided by residues 21-26 (DHGKST) and 139-142 (NKID).

This sequence belongs to the TRAFAC class translation factor GTPase superfamily. Classic translation factor GTPase family. LepA subfamily.

It localises to the cell inner membrane. The enzyme catalyses GTP + H2O = GDP + phosphate + H(+). Functionally, required for accurate and efficient protein synthesis under certain stress conditions. May act as a fidelity factor of the translation reaction, by catalyzing a one-codon backward translocation of tRNAs on improperly translocated ribosomes. Back-translocation proceeds from a post-translocation (POST) complex to a pre-translocation (PRE) complex, thus giving elongation factor G a second chance to translocate the tRNAs correctly. Binds to ribosomes in a GTP-dependent manner. This is Elongation factor 4 from Chlorobium phaeovibrioides (strain DSM 265 / 1930) (Prosthecochloris vibrioformis (strain DSM 265)).